A 314-amino-acid chain; its full sequence is DNA-directed RNA polymerase subunit alpha (314 aa).

The segment at 1-228 is alpha N-terminal domain (alpha-NTD); the sequence is MAQYTIECVE…DQLRPLQEIT (228 aa). The segment at 241–314 is alpha C-terminal domain (alpha-CTD); the sequence is NTVGQVPIEE…SLPKDKPARS (74 aa).

This sequence belongs to the RNA polymerase alpha chain family. In terms of assembly, in cyanobacteria the RNAP catalytic core is composed of 2 alpha, 1 beta, 1 beta', 1 gamma and 1 omega subunit. When a sigma factor is associated with the core the holoenzyme is formed, which can initiate transcription.

It catalyses the reaction RNA(n) + a ribonucleoside 5'-triphosphate = RNA(n+1) + diphosphate. Functionally, DNA-dependent RNA polymerase catalyzes the transcription of DNA into RNA using the four ribonucleoside triphosphates as substrates. The protein is DNA-directed RNA polymerase subunit alpha of Gloeobacter violaceus (strain ATCC 29082 / PCC 7421).